The following is a 242-amino-acid chain: Tryptophan synthase alpha chain (242 aa).

Residues Glu31 and Asp42 each act as proton acceptor in the active site.

Belongs to the TrpA family. In terms of assembly, tetramer of two alpha and two beta chains.

The enzyme catalyses (1S,2R)-1-C-(indol-3-yl)glycerol 3-phosphate + L-serine = D-glyceraldehyde 3-phosphate + L-tryptophan + H2O. It functions in the pathway amino-acid biosynthesis; L-tryptophan biosynthesis; L-tryptophan from chorismate: step 5/5. The alpha subunit is responsible for the aldol cleavage of indoleglycerol phosphate to indole and glyceraldehyde 3-phosphate. This is Tryptophan synthase alpha chain from Staphylococcus aureus (strain Mu3 / ATCC 700698).